Here is a 194-residue protein sequence, read N- to C-terminus: Peptidyl-tRNA hydrolase (194 aa).

Tyr17 contributes to the tRNA binding site. His22 serves as the catalytic Proton acceptor. TRNA is bound by residues Phe68, Asn70, and Asn116.

The protein belongs to the PTH family. In terms of assembly, monomer.

It is found in the cytoplasm. It carries out the reaction an N-acyl-L-alpha-aminoacyl-tRNA + H2O = an N-acyl-L-amino acid + a tRNA + H(+). Its function is as follows. Hydrolyzes ribosome-free peptidyl-tRNAs (with 1 or more amino acids incorporated), which drop off the ribosome during protein synthesis, or as a result of ribosome stalling. In terms of biological role, catalyzes the release of premature peptidyl moieties from peptidyl-tRNA molecules trapped in stalled 50S ribosomal subunits, and thus maintains levels of free tRNAs and 50S ribosomes. This chain is Peptidyl-tRNA hydrolase, found in Haemophilus ducreyi (strain 35000HP / ATCC 700724).